A 428-amino-acid polypeptide reads, in one-letter code: Enolase 2 (428 aa).

Glutamine 162 lines the (2R)-2-phosphoglycerate pocket. The active-site Proton donor is the glutamate 204. Aspartate 241, glutamate 285, and aspartate 312 together coordinate Mg(2+). Positions 337, 366, 367, and 388 each coordinate (2R)-2-phosphoglycerate. The active-site Proton acceptor is the lysine 337.

The protein belongs to the enolase family. Mg(2+) serves as cofactor.

The protein localises to the cytoplasm. The protein resides in the secreted. It is found in the cell surface. It catalyses the reaction (2R)-2-phosphoglycerate = phosphoenolpyruvate + H2O. Its pathway is carbohydrate degradation; glycolysis; pyruvate from D-glyceraldehyde 3-phosphate: step 4/5. Catalyzes the reversible conversion of 2-phosphoglycerate (2-PG) into phosphoenolpyruvate (PEP). It is essential for the degradation of carbohydrates via glycolysis. The polypeptide is Enolase 2 (Lactobacillus johnsonii (strain CNCM I-12250 / La1 / NCC 533)).